Consider the following 109-residue polypeptide: Staphostatin B (109 aa).

The tract at residues 97–101 is binds to staphopain B; sequence IGTSR.

Belongs to the protease inhibitor I57 (SspC) family. As to quaternary structure, forms a stable non-covalent complex with prematurely activated/folded SspB.

The protein resides in the cytoplasm. Specifically inhibits the cysteine protease staphopain B (SspB) by blocking the active site of the enzyme. Probably required to protect cytoplasmic proteins from being degraded by prematurely activated/folded prostaphopain B. Also involved in growth capacity, viability and bacterial morphology. In Staphylococcus aureus (strain NCTC 8325 / PS 47), this protein is Staphostatin B (sspC).